A 132-amino-acid chain; its full sequence is C-X-C motif chemokine 5 (132 aa).

The N-terminal stretch at 1–40 is a signal peptide; that stretch reads MSLQLRSSARIPSGSISPFMRMAPLAFLLLFTLPQHLAEA. Disulfide bonds link C53/C79 and C55/C95.

This sequence belongs to the intercrine alpha (chemokine CxC) family. As to quaternary structure, monomer. Homodimer. In terms of processing, GCP-2(1-78) and GCP-2(9-78) are produced by proteolytic cleavage after secretion from fibroblasts and epithelial cells. GCP-2(9-78) is the most prominent form. A number of additional N-terminal (processed between pos. 41 and 48) and C-terminal (processed between pos. 118 and 132) processed forms have been identified, probably also representing intermediate states.

It is found in the secreted. May participate in the recruitment of inflammatory cells by injured or infected tissue. GCP-2(1-78) and, more potent, GCP-2(9-78) attract neutrophils and are involved in neutrophil activation. The polypeptide is C-X-C motif chemokine 5 (Cxcl5) (Mus musculus (Mouse)).